Reading from the N-terminus, the 190-residue chain is Inner membrane-spanning protein YciB (190 aa).

The next 6 helical transmembrane spans lie at F3–Y23, V24–H44, A49–H69, W76–V96, L121–F141, and F149–L169.

Belongs to the YciB family.

The protein localises to the cell inner membrane. In terms of biological role, plays a role in cell envelope biogenesis, maintenance of cell envelope integrity and membrane homeostasis. This Ralstonia pickettii (strain 12J) protein is Inner membrane-spanning protein YciB.